Reading from the N-terminus, the 303-residue chain is ATP-dependent (S)-NAD(P)H-hydrate dehydratase (303 aa).

One can recognise a YjeF C-terminal domain in the interval 12–299; that stretch reads QQQLVCSVIP…AEVRTAFSML (288 aa). (6S)-NADPHX is bound by residues Gly-106 and 158-164; that span reads NAVELDR. Residues 194-198 and 213-222 each bind ATP; these read KGSED and GSPRRCGGQG. Asp-223 contacts (6S)-NADPHX.

The protein belongs to the NnrD/CARKD family. Requires Mg(2+) as cofactor.

The enzyme catalyses (6S)-NADHX + ATP = ADP + phosphate + NADH + H(+). The catalysed reaction is (6S)-NADPHX + ATP = ADP + phosphate + NADPH + H(+). Functionally, catalyzes the dehydration of the S-form of NAD(P)HX at the expense of ATP, which is converted to ADP. Together with NAD(P)HX epimerase, which catalyzes the epimerization of the S- and R-forms, the enzyme allows the repair of both epimers of NAD(P)HX, a damaged form of NAD(P)H that is a result of enzymatic or heat-dependent hydration. This Ixodes scapularis (Black-legged tick) protein is ATP-dependent (S)-NAD(P)H-hydrate dehydratase.